The primary structure comprises 271 residues: 3-methyl-2-oxobutanoate hydroxymethyltransferase (271 aa).

Residues Asp52 and Asp91 each coordinate Mg(2+). Residues 52–53, Asp91, and Lys121 each bind 3-methyl-2-oxobutanoate; that span reads DS. Glu123 contacts Mg(2+). The active-site Proton acceptor is Glu189.

Belongs to the PanB family. In terms of assembly, homodecamer; pentamer of dimers. The cofactor is Mg(2+).

It is found in the cytoplasm. The catalysed reaction is 3-methyl-2-oxobutanoate + (6R)-5,10-methylene-5,6,7,8-tetrahydrofolate + H2O = 2-dehydropantoate + (6S)-5,6,7,8-tetrahydrofolate. It participates in cofactor biosynthesis; (R)-pantothenate biosynthesis; (R)-pantoate from 3-methyl-2-oxobutanoate: step 1/2. Functionally, catalyzes the reversible reaction in which hydroxymethyl group from 5,10-methylenetetrahydrofolate is transferred onto alpha-ketoisovalerate to form ketopantoate. The chain is 3-methyl-2-oxobutanoate hydroxymethyltransferase from Acidothermus cellulolyticus (strain ATCC 43068 / DSM 8971 / 11B).